Consider the following 57-residue polypeptide: Large ribosomal subunit protein bL32 (57 aa).

The span at 1 to 19 (MATPKRRMSRANTRSRRSQ) shows a compositional bias: basic residues. The segment at 1-20 (MATPKRRMSRANTRSRRSQW) is disordered.

The protein belongs to the bacterial ribosomal protein bL32 family.

This is Large ribosomal subunit protein bL32 from Mycobacterium marinum (strain ATCC BAA-535 / M).